We begin with the raw amino-acid sequence, 171 residues long: Probable deoxyuridine 5'-triphosphate nucleotidohydrolase (171 aa).

Belongs to the dCTP deaminase family. Archaeal dUTPase subfamily.

It catalyses the reaction dUTP + H2O = dUMP + diphosphate + H(+). The protein operates within pyrimidine metabolism; dUMP biosynthesis; dUMP from dCTP (dUTP route): step 2/2. In terms of biological role, this enzyme is involved in nucleotide metabolism: it produces dUMP, the immediate precursor of thymidine nucleotides and it decreases the intracellular concentration of dUTP so that uracil cannot be incorporated into DNA. The polypeptide is Probable deoxyuridine 5'-triphosphate nucleotidohydrolase (Methanosarcina barkeri (strain Fusaro / DSM 804)).